The following is a 132-amino-acid chain: Small ribosomal subunit protein uS8 (132 aa).

It belongs to the universal ribosomal protein uS8 family. In terms of assembly, part of the 30S ribosomal subunit. Contacts proteins S5 and S12.

Functionally, one of the primary rRNA binding proteins, it binds directly to 16S rRNA central domain where it helps coordinate assembly of the platform of the 30S subunit. This chain is Small ribosomal subunit protein uS8, found in Lactococcus lactis subsp. lactis (strain IL1403) (Streptococcus lactis).